Here is a 378-residue protein sequence, read N- to C-terminus: MSVSAKETQRHPARPEPRPGVLAISAYVPGKSHAAGVEKVFKLSSNETPLGPSPKAIAAFQSAGTNLQDYPDGSSTALREAIGKAMGIDPDRIICGAGSDEILNLIAHAYVGPGDEAIHCAHGFLVYKIATLGAGGVPVVVPDREDLQMDVDAIIGAVTERTRVIFLANPNNPTGTYLPFNEVRRLHAALPPNVLLVLDAAYSEYVRRNDYETGLELALSAENVIMCRTFSKIHGLAALRIGWAVASEAVIDALNRIRGPFNMNAPAIAAGAAAILDAEHVERSIAHNDQWLSWLTTELTALGLTVTPSVGNFVLIHFPKTPGRTAAEADAFLTRRGLILRAVASYGLPDSLRMTIGTEEANRLVVQALSDFLSGAER.

Residues 1 to 20 (MSVSAKETQRHPARPEPRPG) are disordered. Basic and acidic residues predominate over residues 7-17 (ETQRHPARPEP). Lys-232 is subject to N6-(pyridoxal phosphate)lysine.

It belongs to the class-II pyridoxal-phosphate-dependent aminotransferase family. Histidinol-phosphate aminotransferase subfamily. As to quaternary structure, homodimer. It depends on pyridoxal 5'-phosphate as a cofactor.

The catalysed reaction is L-histidinol phosphate + 2-oxoglutarate = 3-(imidazol-4-yl)-2-oxopropyl phosphate + L-glutamate. Its pathway is amino-acid biosynthesis; L-histidine biosynthesis; L-histidine from 5-phospho-alpha-D-ribose 1-diphosphate: step 7/9. The sequence is that of Histidinol-phosphate aminotransferase from Azorhizobium caulinodans (strain ATCC 43989 / DSM 5975 / JCM 20966 / LMG 6465 / NBRC 14845 / NCIMB 13405 / ORS 571).